The following is a 150-amino-acid chain: Large ribosomal subunit protein bL9 (150 aa).

It belongs to the bacterial ribosomal protein bL9 family.

In terms of biological role, binds to the 23S rRNA. This Shewanella oneidensis (strain ATCC 700550 / JCM 31522 / CIP 106686 / LMG 19005 / NCIMB 14063 / MR-1) protein is Large ribosomal subunit protein bL9.